Consider the following 562-residue polypeptide: DNA-binding protein MutS2 (562 aa).

380–387 (GANSGGKT) provides a ligand contact to ATP.

It belongs to the DNA mismatch repair MutS family. Archaeal Muts2 subfamily. As to quaternary structure, multimer. Co(2+) serves as cofactor. Mn(2+) is required as a cofactor.

In terms of biological role, has ATPase and non-specific DNA-binding activities. May be involved in recombination and/or recombinational repair. Not involved in mismatch repair. This is DNA-binding protein MutS2 from Pyrococcus furiosus (strain ATCC 43587 / DSM 3638 / JCM 8422 / Vc1).